We begin with the raw amino-acid sequence, 80 residues long: Exodeoxyribonuclease 7 small subunit (80 aa).

The protein belongs to the XseB family. As to quaternary structure, heterooligomer composed of large and small subunits.

It localises to the cytoplasm. The enzyme catalyses Exonucleolytic cleavage in either 5'- to 3'- or 3'- to 5'-direction to yield nucleoside 5'-phosphates.. Bidirectionally degrades single-stranded DNA into large acid-insoluble oligonucleotides, which are then degraded further into small acid-soluble oligonucleotides. The polypeptide is Exodeoxyribonuclease 7 small subunit (Pseudomonas fluorescens (strain SBW25)).